The primary structure comprises 342 residues: Uroporphyrinogen decarboxylase (342 aa).

Substrate contacts are provided by residues 22 to 26, F42, D72, Y146, S201, and H317; that span reads RQAGR.

Belongs to the uroporphyrinogen decarboxylase family. Homodimer.

It localises to the cytoplasm. It catalyses the reaction uroporphyrinogen III + 4 H(+) = coproporphyrinogen III + 4 CO2. Its pathway is porphyrin-containing compound metabolism; protoporphyrin-IX biosynthesis; coproporphyrinogen-III from 5-aminolevulinate: step 4/4. In terms of biological role, catalyzes the decarboxylation of four acetate groups of uroporphyrinogen-III to yield coproporphyrinogen-III. The protein is Uroporphyrinogen decarboxylase of Orientia tsutsugamushi (strain Ikeda) (Rickettsia tsutsugamushi).